The primary structure comprises 453 residues: MQLSNSLRSARSAAASSGCALASRPVVACRRVTPSVTRPGPFTIATGPLLPASRSKAGGGIRVFSSALYEFGQQLKEDLDHDLSRARVDAIANKTRIAELEQQRRILMAVGGMADDEPELKAALMQLEEILGVSFNELQLMLAETLADHPAKMDNLAAMAAVVGTGSDGGGDESGDRDTADAADADGDGGERAWLRFKADVHACLADLRNRKDGITLHRAIVKDMVRASSNPGARRSSSSVDKMARQELDRLMPFLLDDFLDKMPGLKAAFTGKAEPGAEGDDGEGEEEGEAQDVGEDAVDSSSSGGGGGVLSCAAWQQVLGRTVRAVSPTLALVLARGYLAMAPRQYRALALVRMILPGKTGGGVDGALTRKEGLSLLKKLRPGISGLADKDKQWLEWVIARLAAEFAVQSAGDGHEPEPKRPELPPTAVQRKPPAEEQHKPTAGARDSPNM.

Residues 1-28 (MQLSNSLRSARSAAASSGCALASRPVVA) form the signal peptide. Disordered stretches follow at residues 167-187 (SDGG…DADG), 272-307 (TGKA…SSGG), and 412-453 (SAGD…SPNM). A compositionally biased stretch (acidic residues) spans 279 to 300 (AEGDDGEGEEEGEAQDVGEDAV). Over residues 415 to 425 (DGHEPEPKRPE) the composition is skewed to basic and acidic residues.

The polypeptide is Ezy-1 protein (Ezy-1) (Chlamydomonas reinhardtii (Chlamydomonas smithii)).